Reading from the N-terminus, the 352-residue chain is UDP-N-acetylglucosamine--N-acetylmuramyl-(pentapeptide) pyrophosphoryl-undecaprenol N-acetylglucosamine transferase (352 aa).

Residues 12–14 (TGG), Asn-124, Arg-160, Ser-188, and Gln-287 each bind UDP-N-acetyl-alpha-D-glucosamine.

It belongs to the glycosyltransferase 28 family. MurG subfamily.

It is found in the cell inner membrane. The enzyme catalyses di-trans,octa-cis-undecaprenyl diphospho-N-acetyl-alpha-D-muramoyl-L-alanyl-D-glutamyl-meso-2,6-diaminopimeloyl-D-alanyl-D-alanine + UDP-N-acetyl-alpha-D-glucosamine = di-trans,octa-cis-undecaprenyl diphospho-[N-acetyl-alpha-D-glucosaminyl-(1-&gt;4)]-N-acetyl-alpha-D-muramoyl-L-alanyl-D-glutamyl-meso-2,6-diaminopimeloyl-D-alanyl-D-alanine + UDP + H(+). The protein operates within cell wall biogenesis; peptidoglycan biosynthesis. Its function is as follows. Cell wall formation. Catalyzes the transfer of a GlcNAc subunit on undecaprenyl-pyrophosphoryl-MurNAc-pentapeptide (lipid intermediate I) to form undecaprenyl-pyrophosphoryl-MurNAc-(pentapeptide)GlcNAc (lipid intermediate II). This chain is UDP-N-acetylglucosamine--N-acetylmuramyl-(pentapeptide) pyrophosphoryl-undecaprenol N-acetylglucosamine transferase, found in Dechloromonas aromatica (strain RCB).